A 465-amino-acid chain; its full sequence is Cysteine--tRNA ligase (465 aa).

Residue C30 participates in Zn(2+) binding. Positions 32-42 match the 'HIGH' region motif; the sequence is MTVYDYCHVGH. Residues C214, H239, and E243 each coordinate Zn(2+). A 'KMSKS' region motif is present at residues 271–275; the sequence is KMSKS. Position 274 (K274) interacts with ATP.

Belongs to the class-I aminoacyl-tRNA synthetase family. As to quaternary structure, monomer. It depends on Zn(2+) as a cofactor.

The protein localises to the cytoplasm. It catalyses the reaction tRNA(Cys) + L-cysteine + ATP = L-cysteinyl-tRNA(Cys) + AMP + diphosphate. This Paraburkholderia xenovorans (strain LB400) protein is Cysteine--tRNA ligase.